The sequence spans 123 residues: MTWPYSNSFKLIKAYQKHSNTYQSCTNHKYKSVLLKKWTQDVMDNELRIESRPYKNCDAFCQMCLSVVTINEYLCCDKCLFPIIDYLEKQRQLTPRQQLYMFVFLSICYWKEAAERRLATMKN.

This is an uncharacterized protein from Autographa californica nuclear polyhedrosis virus (AcMNPV).